The primary structure comprises 1040 residues: Alpha-mannosidase 2C1 (1040 aa).

4 residues coordinate Co(2+): His-260, Asp-262, Asp-372, and His-577. Asp-372 acts as the Nucleophile in catalysis.

This sequence belongs to the glycosyl hydrolase 38 family. Co(2+) is required as a cofactor.

Its subcellular location is the cytoplasm. It catalyses the reaction Hydrolysis of terminal, non-reducing alpha-D-mannose residues in alpha-D-mannosides.. With respect to regulation, strongly inhibited by swainsonine. Also inhibited to a lesser extent by deoxymannojirimycin (DMM). Its function is as follows. Cleaves alpha 1,2-, alpha 1,3-, and alpha 1,6-linked mannose residues on cytoplasmic free oligosaccharides generated by N-glycoprotein degradation pathways. The sequence is that of Alpha-mannosidase 2C1 (MAN2C1) from Homo sapiens (Human).